We begin with the raw amino-acid sequence, 179 residues long: Gamma-crystallin S (179 aa).

The residue at position 2 (S2) is an N-acetylserine. An N-terminal arm region spans residues S2–G5. Beta/gamma crystallin 'Greek key' domains follow at residues T6–G44 and G45–H87. The tract at residues L88 to Q93 is connecting peptide. Beta/gamma crystallin 'Greek key' domains follow at residues Y94 to D134 and G135 to V177.

It belongs to the beta/gamma-crystallin family. Monomer.

Crystallins are the dominant structural components of the vertebrate eye lens. This is Gamma-crystallin S (CRYGS) from Oryctolagus cuniculus (Rabbit).